A 409-amino-acid polypeptide reads, in one-letter code: uncharacterized protein (409 aa).

The region spanning 3–162 is the N-acetyltransferase domain; the sequence is TDVRVLRQDD…DDVRLRYAVP (160 aa). Residues 82 to 84, 90 to 95, and 118 to 119 contribute to the acetyl-CoA site; these read VSV, RRGVLT, and SE. The Proton donor role is filled by tyrosine 123. Phenylalanine 409 (proton acceptor; via carboxylate) is an active-site residue.

This sequence belongs to the acetyltransferase Eis family. In terms of assembly, homohexamer; trimer of dimers.

This is an uncharacterized protein from Streptomyces avermitilis (strain ATCC 31267 / DSM 46492 / JCM 5070 / NBRC 14893 / NCIMB 12804 / NRRL 8165 / MA-4680).